We begin with the raw amino-acid sequence, 521 residues long: Probable protein kinase UbiB (521 aa).

Positions 119–497 (SFDRQPVASA…QKRTNRLLQS (379 aa)) constitute a Protein kinase domain. Residues 125–133 (VASASIAQV) and Lys-151 contribute to the ATP site. Residue Asp-286 is the Proton acceptor of the active site. A helical membrane pass occupies residues 496-516 (QSLIYGGLGFVLGLLVMQLFV).

The protein belongs to the ABC1 family. UbiB subfamily.

It is found in the cell inner membrane. Its pathway is cofactor biosynthesis; ubiquinone biosynthesis [regulation]. Is probably a protein kinase regulator of UbiI activity which is involved in aerobic coenzyme Q (ubiquinone) biosynthesis. The sequence is that of Probable protein kinase UbiB from Acidovorax sp. (strain JS42).